The sequence spans 745 residues: Elongation factor G, mitochondrial (745 aa).

In terms of domain architecture, tr-type G spans 40-317; it reads ERIRNIGISA…AVLDYLPNPG (278 aa). Residues 49 to 56, 116 to 120, and 170 to 173 contribute to the GTP site; these read AHIDSGKT, DTPGH, and NKLD.

This sequence belongs to the TRAFAC class translation factor GTPase superfamily. Classic translation factor GTPase family. EF-G/EF-2 subfamily.

The protein resides in the mitochondrion. It functions in the pathway protein biosynthesis; polypeptide chain elongation. In terms of biological role, mitochondrial GTPase that catalyzes the GTP-dependent ribosomal translocation step during translation elongation. During this step, the ribosome changes from the pre-translocational (PRE) to the post-translocational (POST) state as the newly formed A-site-bound peptidyl-tRNA and P-site-bound deacylated tRNA move to the P and E sites, respectively. Catalyzes the coordinated movement of the two tRNA molecules, the mRNA and conformational changes in the ribosome. Essential during development as it acts as a retrograde signal from mitochondria to the nucleus to slow down cell proliferation if mitochondrial energy output is low. In Drosophila sechellia (Fruit fly), this protein is Elongation factor G, mitochondrial.